The chain runs to 361 residues: 5-exo-hydroxycamphor dehydrogenase (361 aa).

6 residues coordinate Zn(2+): Cys-40, His-62, Cys-98, Cys-101, Cys-104, and Cys-170.

The protein belongs to the zinc-containing alcohol dehydrogenase family. The cofactor is Zn(2+).

The enzyme catalyses (1R,4R,5R)-5-hydroxycamphor + NAD(+) = (1R,4R)-bornane-2,5-dione + NADH + H(+). The protein operates within terpene metabolism; (R)-camphor degradation. This chain is 5-exo-hydroxycamphor dehydrogenase (camD), found in Pseudomonas putida (Arthrobacter siderocapsulatus).